A 246-amino-acid polypeptide reads, in one-letter code: tRNA pseudouridine synthase A (246 aa).

The active-site Nucleophile is the Asp53. Tyr111 lines the substrate pocket.

The protein belongs to the tRNA pseudouridine synthase TruA family. In terms of assembly, homodimer.

The catalysed reaction is uridine(38/39/40) in tRNA = pseudouridine(38/39/40) in tRNA. Its function is as follows. Formation of pseudouridine at positions 38, 39 and 40 in the anticodon stem and loop of transfer RNAs. The chain is tRNA pseudouridine synthase A from Anoxybacillus flavithermus (strain DSM 21510 / WK1).